Reading from the N-terminus, the 112-residue chain is MMKFVVFLACLFVAAHSFAVEGEEEYFEAEVPELERAKALPPGSVCDGNESDCKCYGKWHKCRCPWKWHFTGEGPCTCEKGMKHTCITKLHCPNKAEWGLDWRSEESERSPC.

The first 19 residues, 1-19, serve as a signal peptide directing secretion; it reads MMKFVVFLACLFVAAHSFA. A propeptide spanning residues 20 to 36 is cleaved from the precursor; the sequence is VEGEEEYFEAEVPELER. Residues 103–109 constitute a propeptide, glu-rich; sequence RSEESER.

The protein belongs to the neurotoxin 04 (omega-agtx) family. 01 (type I omega-agtx) subfamily. Heterodimer of two subunits, a major chain and a minor chain, linked by a disulfide bond. In terms of processing, proteolytically processed to yield the major and the minor chains. In terms of tissue distribution, expressed by the venom gland.

It is found in the secreted. In terms of biological role, omega-agatoxins are antagonists of voltage-gated calcium channels. They block insect neuromuscular transmission presynaptically. This toxin is a blocker of L-type calcium channels (Cav/CACNA1). The polypeptide is Omega-agatoxin-1A (Agelenopsis aperta (North American funnel-web spider)).